A 335-amino-acid polypeptide reads, in one-letter code: Succinylglutamate desuccinylase (335 aa).

The Zn(2+) site is built by histidine 59, glutamate 62, and histidine 151. Residue glutamate 215 is part of the active site.

Belongs to the AspA/AstE family. Succinylglutamate desuccinylase subfamily. Zn(2+) is required as a cofactor.

The catalysed reaction is N-succinyl-L-glutamate + H2O = L-glutamate + succinate. It participates in amino-acid degradation; L-arginine degradation via AST pathway; L-glutamate and succinate from L-arginine: step 5/5. In terms of biological role, transforms N(2)-succinylglutamate into succinate and glutamate. This is Succinylglutamate desuccinylase from Pseudomonas putida (strain GB-1).